Reading from the N-terminus, the 313-residue chain is Secreted mono- and diacylglycerol lipase MDL5 (313 aa).

The N-terminal stretch at 1–20 is a signal peptide; it reads MQLQYVLTLLWIIFAQNVFS. Cys66 and Cys306 form a disulfide bridge. Residues Asn72 and Asn111 are each glycosylated (N-linked (GlcNAc...) asparagine). Ser180 functions as the Nucleophile in the catalytic mechanism. Asp238 is an active-site residue. An N-linked (GlcNAc...) asparagine glycan is attached at Asn263. His290 is an active-site residue.

It belongs to the AB hydrolase superfamily. Lipase family. Class 3 subfamily.

Its subcellular location is the secreted. The protein resides in the cell wall. It catalyses the reaction a monoacylglycerol + H2O = glycerol + a fatty acid + H(+). The catalysed reaction is a diacylglycerol + H2O = a monoacylglycerol + a fatty acid + H(+). In terms of biological role, secreted lipase involved in Dandruff and seborrheic dermatitis (D/SD) probably via lipase-mediated breakdown of sebaceous lipids and release of irritating free fatty acids. Shows activity against monoglyceride and diglyceride substrates, but not triglyceride substrates and does not exhibit regio-selective production of diacylglycerols. Cleaves oleic acid from 1,2 isomers of diolein on both the 1 and the 2 position of the glycerol backbone, resulting mainly in free fatty acids but no monoolein is detected. Shows activity on monoolein and liberates mostly free fatty acids, but can also perform the reverse reaction and produce diolein. The sequence is that of Secreted mono- and diacylglycerol lipase MDL5 from Malassezia globosa (strain ATCC MYA-4612 / CBS 7966) (Dandruff-associated fungus).